The sequence spans 130 residues: Small ribosomal subunit protein uS9 (130 aa).

Residues 109–130 (RVKERKKPGLKKARKARQFSKR) form a disordered region. A compositionally biased stretch (basic residues) spans 111 to 130 (KERKKPGLKKARKARQFSKR).

This sequence belongs to the universal ribosomal protein uS9 family.

The protein is Small ribosomal subunit protein uS9 of Mycoplasma mobile (strain ATCC 43663 / 163K / NCTC 11711) (Mesomycoplasma mobile).